Consider the following 58-residue polypeptide: uncharacterized protein (58 aa).

Residues 12–32 (VMTLLITISILIVLAVLLVTI) form a helical membrane-spanning segment.

It localises to the cell membrane. This is an uncharacterized protein from Bacillus subtilis (strain 168).